The following is a 260-amino-acid chain: tRNA pseudouridine synthase A (260 aa).

The Nucleophile role is filled by Asp52. Residue Tyr110 coordinates substrate.

It belongs to the tRNA pseudouridine synthase TruA family. In terms of assembly, homodimer.

The catalysed reaction is uridine(38/39/40) in tRNA = pseudouridine(38/39/40) in tRNA. Functionally, formation of pseudouridine at positions 38, 39 and 40 in the anticodon stem and loop of transfer RNAs. In Spiroplasma kunkelii, this protein is tRNA pseudouridine synthase A.